Here is a 120-residue protein sequence, read N- to C-terminus: Large ribosomal subunit protein uL18 (120 aa).

This sequence belongs to the universal ribosomal protein uL18 family. In terms of assembly, part of the 50S ribosomal subunit; part of the 5S rRNA/L5/L18/L25 subcomplex. Contacts the 5S and 23S rRNAs.

Its function is as follows. This is one of the proteins that bind and probably mediate the attachment of the 5S RNA into the large ribosomal subunit, where it forms part of the central protuberance. The sequence is that of Large ribosomal subunit protein uL18 from Ehrlichia ruminantium (strain Gardel).